We begin with the raw amino-acid sequence, 1938 residues long: Myosin heavy chain, striated muscle (1938 aa).

The 51-residue stretch at 29–79 (DGKKNCWVPDEKEGFASAEIQSSKGDEITVKIVADSSTRTVKKDDIQSMNP) folds into the Myosin N-terminal SH3-like domain. The Myosin motor domain maps to 83–775 (EKLEDMANMT…VLGNLEEMRD (693 aa)). 176 to 183 (GESGAGKT) is an ATP binding site. Positions 653–675 (LNKLMKNLYSTHPHFVRCIIPNE) are actin-binding. The 28-residue stretch at 778 to 805 (LSKIISMFQAHIRGYLIRKAYKKLQDQR) folds into the IQ domain. The rodlike tail (S2 and LMM domains) stretch occupies residues 836–1938 (LLSIARQEEE…RSSVSVSASN (1103 aa)). Positions 836 to 1938 (LLSIARQEEE…RSSVSVSASN (1103 aa)) form a coiled coil. 2 stretches are compositionally biased toward basic and acidic residues: residues 1041–1058 (VRGD…DLKS) and 1212–1225 (SKLE…KREM). Disordered regions lie at residues 1041-1062 (VRGD…TQEN), 1187-1332 (SALR…EVRN), 1344-1363 (LEEE…KANN), and 1898-1938 (HELE…SASN). Polar residues predominate over residues 1265–1285 (RSINELQSQKSRLQAENSDLT). Composition is skewed to basic and acidic residues over residues 1286–1303 (RQLE…KEKS), 1310–1332 (EDAR…EVRN), and 1344–1354 (LEEEQESKSDV). Over residues 1922 to 1938 (RSSVSVQRSSVSVSASN) the composition is skewed to low complexity.

The protein belongs to the TRAFAC class myosin-kinesin ATPase superfamily. Myosin family. Muscle myosin is a hexameric protein that consists of 2 heavy chain subunits (MHC), 2 alkali light chain subunits (MLC) and 2 regulatory light chain subunits (MLC-2).

It is found in the cytoplasm. Its subcellular location is the myofibril. Muscle contraction. Its function is as follows. Myosin is a protein that binds to F-actin and has ATPase activity that is activated by F-actin. The chain is Myosin heavy chain, striated muscle from Argopecten irradians (Bay scallop).